Reading from the N-terminus, the 91-residue chain is Hepcidin-2 (91 aa).

The signal sequence occupies residues 1–24; that stretch reads MKLSNVFLAAVVILTCVCVFQITA. Residues 25–64 constitute a propeptide that is removed on maturation; sequence VPFIQQVQDEHHVESEELQENQHLTEAEHRLTDPLVLFRT. Intrachain disulfides connect cysteine 73–cysteine 89, cysteine 76–cysteine 79, cysteine 77–cysteine 85, and cysteine 80–cysteine 88.

Belongs to the hepcidin family.

The protein localises to the secreted. Functionally, seems to act as a signaling molecule involved in the maintenance of iron homeostasis. Seems to be required in conjunction with HFE to regulate both intestinal iron absorption and iron storage in macrophages. May also have antimicrobial activity. The protein is Hepcidin-2 (hamp2) of Danio rerio (Zebrafish).